Here is a 248-residue protein sequence, read N- to C-terminus: Small ribosomal subunit protein uS5 (248 aa).

Positions 1–87 (MEDKKLSSAK…NPRFQRNNKD (87 aa)) are disordered. Over residues 8 to 23 (SAKPATSSKPAPKAPS) the composition is skewed to low complexity. Residues 57–87 (VAFEKRNFTSGDKTKKPTDSKNPRFQRNNKD) show a composition bias toward basic and acidic residues. In terms of domain architecture, S5 DRBM spans 94–157 (YEEKIVDIAR…KDAHNNLVEV (64 aa)).

This sequence belongs to the universal ribosomal protein uS5 family. Part of the 30S ribosomal subunit. Contacts proteins S4 and S8.

With S4 and S12 plays an important role in translational accuracy. Functionally, located at the back of the 30S subunit body where it stabilizes the conformation of the head with respect to the body. This is Small ribosomal subunit protein uS5 from Mycoplasmopsis synoviae (strain 53) (Mycoplasma synoviae).